Here is a 132-residue protein sequence, read N- to C-terminus: UPF0047 protein YugU (132 aa).

It belongs to the UPF0047 family.

The polypeptide is UPF0047 protein YugU (yugU) (Bacillus subtilis (strain 168)).